A 328-amino-acid chain; its full sequence is Cell division protein ZipA (328 aa).

The Periplasmic segment spans residues 1-4; it reads MDLN. The chain crosses the membrane as a helical span at residues 5–25; sequence TILIIVGIVALVALIVHGLWS. The Cytoplasmic segment spans residues 26 to 328; the sequence is NRREKSKYFD…NAEQAYLARV (303 aa). A disordered region spans residues 44–82; it reads SLTSRSHTQEEMVQPNNISPNTYVENGHTPIPQPTTEKL. Residues 57-67 show a composition bias toward polar residues; sequence QPNNISPNTYV.

The protein belongs to the ZipA family. Interacts with FtsZ via their C-terminal domains.

The protein localises to the cell inner membrane. Essential cell division protein that stabilizes the FtsZ protofilaments by cross-linking them and that serves as a cytoplasmic membrane anchor for the Z ring. Also required for the recruitment to the septal ring of downstream cell division proteins. This chain is Cell division protein ZipA, found in Haemophilus influenzae (strain ATCC 51907 / DSM 11121 / KW20 / Rd).